The sequence spans 486 residues: Maternal protein exuperantia (486 aa).

2 disordered regions span residues 202-233 (NARV…RDEF) and 386-477 (STIR…ISLP). A compositionally biased stretch (basic and acidic residues) spans 218-233 (ADKHVKNGLQKERDEF). Over residues 387-397 (TIRRRNKRNTP) the composition is skewed to basic residues. 2 stretches are compositionally biased toward polar residues: residues 420–437 (KSQS…TPSP) and 464–476 (SALN…SISL).

Functionally, ensures the proper localization of the mRNA of the bicoid gene to the anterior regions of the oocyte thus playing a fundamental role in the establishment of the polarity of the oocyte. May bind the bcd mRNA. This Drosophila virilis (Fruit fly) protein is Maternal protein exuperantia (exu).